Here is a 271-residue protein sequence, read N- to C-terminus: D-methionine-binding lipoprotein MetQ (271 aa).

An N-terminal signal peptide occupies residues 1–22; the sequence is MAFKFKTFAAVGALIGSLALVG. Residue Cys-23 is the site of N-palmitoyl cysteine attachment. The S-diacylglycerol cysteine moiety is linked to residue Cys-23.

This sequence belongs to the NlpA lipoprotein family.

It localises to the cell membrane. In terms of biological role, this protein is a component of a D-methionine permease, a binding protein-dependent, ATP-driven transport system. The polypeptide is D-methionine-binding lipoprotein MetQ (metQ) (Escherichia coli (strain K12)).